We begin with the raw amino-acid sequence, 505 residues long: Putative diacyglycerol O-acyltransferase MT0919 (505 aa).

His-167 acts as the Proton acceptor in catalysis.

The protein belongs to the long-chain O-acyltransferase family.

It catalyses the reaction an acyl-CoA + a 1,2-diacyl-sn-glycerol = a triacyl-sn-glycerol + CoA. It participates in glycerolipid metabolism; triacylglycerol biosynthesis. This Mycobacterium tuberculosis (strain CDC 1551 / Oshkosh) protein is Putative diacyglycerol O-acyltransferase MT0919.